We begin with the raw amino-acid sequence, 166 residues long: Photosystem I assembly protein Ycf3 (166 aa).

TPR repeat units lie at residues 35 to 68 (AFTYYRDGMAAQAEGEYAEALQNYYQALRLEIDP), 72 to 105 (SYILYNIGLIYTCNGEHGRALEYYYQALERNPSL), and 120 to 153 (GEQAIERGQSEISKLLFDKAADYWKEAIRLAPTN).

This sequence belongs to the Ycf3 family.

Its subcellular location is the plastid. The protein resides in the chloroplast thylakoid membrane. Essential for the assembly of the photosystem I (PSI) complex. May act as a chaperone-like factor to guide the assembly of the PSI subunits. The protein is Photosystem I assembly protein Ycf3 of Oltmannsiellopsis viridis (Marine flagellate).